A 247-amino-acid polypeptide reads, in one-letter code: Ribonuclease 3 (247 aa).

In terms of domain architecture, RNase III spans 5-147 (LIALQERLQH…LIGAVYLDAG (143 aa)). E40 is a binding site for Mg(2+). D44 is a catalytic residue. The interval 104–124 (QRRSRRRCADELQPDEAGSGG) is disordered. Mg(2+) contacts are provided by D133 and E136. Residue E136 is part of the active site. Residues 174–244 (DAKTALQEWL…AAAMLATLKA (71 aa)) form the DRBM domain.

Belongs to the ribonuclease III family. As to quaternary structure, homodimer. The cofactor is Mg(2+).

Its subcellular location is the cytoplasm. It catalyses the reaction Endonucleolytic cleavage to 5'-phosphomonoester.. Functionally, digests double-stranded RNA. Involved in the processing of primary rRNA transcript to yield the immediate precursors to the large and small rRNAs (23S and 16S). Processes some mRNAs, and tRNAs when they are encoded in the rRNA operon. Processes pre-crRNA and tracrRNA of type II CRISPR loci if present in the organism. This chain is Ribonuclease 3, found in Verminephrobacter eiseniae (strain EF01-2).